The sequence spans 530 residues: Phosphoenolpyruvate carboxykinase (ATP) (530 aa).

Positions 60, 195, and 201 each coordinate substrate. ATP contacts are provided by residues lysine 201, histidine 221, and 237 to 245 (GLSGTGKTT). Mn(2+) is bound by residues lysine 201 and histidine 221. Aspartate 258 contributes to the Mn(2+) binding site. ATP contacts are provided by residues glutamate 286, arginine 324, 443–444 (RI), and serine 449. Residue arginine 324 coordinates substrate.

The protein belongs to the phosphoenolpyruvate carboxykinase (ATP) family. The cofactor is Mn(2+).

It is found in the cytoplasm. The catalysed reaction is oxaloacetate + ATP = phosphoenolpyruvate + ADP + CO2. It functions in the pathway carbohydrate biosynthesis; gluconeogenesis. In terms of biological role, involved in the gluconeogenesis. Catalyzes the conversion of oxaloacetate (OAA) to phosphoenolpyruvate (PEP) through direct phosphoryl transfer between the nucleoside triphosphate and OAA. In Pelobacter propionicus (strain DSM 2379 / NBRC 103807 / OttBd1), this protein is Phosphoenolpyruvate carboxykinase (ATP).